A 121-amino-acid chain; its full sequence is UPF0102 protein BDI_2565 (121 aa).

The protein belongs to the UPF0102 family.

The protein is UPF0102 protein BDI_2565 of Parabacteroides distasonis (strain ATCC 8503 / DSM 20701 / CIP 104284 / JCM 5825 / NCTC 11152).